The primary structure comprises 74 residues: Ubiquitin-like protein FUBI (74 aa).

It belongs to the ubiquitin family.

The protein is Ubiquitin-like protein FUBI (FAU) of Bos taurus (Bovine).